We begin with the raw amino-acid sequence, 416 residues long: Serine hydroxymethyltransferase (416 aa).

(6S)-5,6,7,8-tetrahydrofolate contacts are provided by residues Leu-121 and 125-127 (GHL). The residue at position 229 (Lys-229) is an N6-(pyridoxal phosphate)lysine.

It belongs to the SHMT family. In terms of assembly, homodimer. Pyridoxal 5'-phosphate serves as cofactor.

The protein localises to the cytoplasm. The enzyme catalyses (6R)-5,10-methylene-5,6,7,8-tetrahydrofolate + glycine + H2O = (6S)-5,6,7,8-tetrahydrofolate + L-serine. It participates in one-carbon metabolism; tetrahydrofolate interconversion. The protein operates within amino-acid biosynthesis; glycine biosynthesis; glycine from L-serine: step 1/1. Catalyzes the reversible interconversion of serine and glycine with tetrahydrofolate (THF) serving as the one-carbon carrier. This reaction serves as the major source of one-carbon groups required for the biosynthesis of purines, thymidylate, methionine, and other important biomolecules. Also exhibits THF-independent aldolase activity toward beta-hydroxyamino acids, producing glycine and aldehydes, via a retro-aldol mechanism. The protein is Serine hydroxymethyltransferase of Neisseria gonorrhoeae (strain ATCC 700825 / FA 1090).